Here is a 479-residue protein sequence, read N- to C-terminus: Transmembrane protein 161A (479 aa).

The N-terminal stretch at 1–28 is a signal peptide; that stretch reads MAVLGVQLVVTLLTATLMHRLAPHCSFA. Over 29–98 the chain is Extracellular; that stretch reads RWLLCNGSLF…LTTVDALVLR (70 aa). Asparagine 34 carries N-linked (GlcNAc...) asparagine glycosylation. The residue at position 69 (serine 69) is a Phosphoserine. A helical membrane pass occupies residues 99–119; that stretch reads FFLEYQWFVDFAVYSGGVYLF. The Cytoplasmic portion of the chain corresponds to 120-134; that stretch reads TEAYYYMLGPAKETN. A helical transmembrane segment spans residues 135–155; that stretch reads IAVFWCLLTVTFSIKMFLTVT. Residues 156–166 are Extracellular-facing; sequence RLYFSAEEGGE. Residues 167–187 traverse the membrane as a helical segment; it reads RSVCLTFAFLFLLLAMLVQVV. The Cytoplasmic portion of the chain corresponds to 188 to 224; it reads REETLELGLEPGLASMTQNLEPLLKKQGWDWALPVAK. Residues 225–245 form a helical membrane-spanning segment; sequence LAIRVGLAVVGSVLGAFLTFP. Residues 246–263 are Extracellular-facing; the sequence is GLRLAQTHRDALTMSEDR. The helical transmembrane segment at 264 to 284 threads the bilayer; it reads PMLQFLLHTSFLSPLFILWLW. The Cytoplasmic segment spans residues 285 to 304; it reads TKPIARDFLHQPPFGETRFS. A helical membrane pass occupies residues 305-325; that stretch reads LLSDSAFDSGRLWLLVVLCLL. Residues 326 to 370 lie on the Extracellular side of the membrane; that stretch reads RLAVTRPHLQAYLCLAKARVEQLRREAGRIEAREIQQRVVRVYCY. A helical transmembrane segment spans residues 371–391; it reads VTVVSLQYLTPLILTLNCTLL. Residues 392–449 lie on the Cytoplasmic side of the membrane; the sequence is LKTLGGYSWGLGPAPLLSPDPSSASAAPIGSGEDEVQQTAARIAGALGGLLTPLFLRG. Residues 450-470 form a helical membrane-spanning segment; sequence VLAYLIWWTAACQLLASLFGL. The Extracellular portion of the chain corresponds to 471–479; sequence YFHQHLAGS.

This sequence belongs to the TMEM161 family.

Its subcellular location is the membrane. Its function is as follows. May play a role in protection against oxidative stress. Overexpression leads to reduced levels of oxidant-induced DNA damage and apoptosis. In Homo sapiens (Human), this protein is Transmembrane protein 161A (TMEM161A).